A 444-amino-acid polypeptide reads, in one-letter code: Docking protein 3 (444 aa).

In terms of domain architecture, PH spans 7–123 (PVKDGILYQQ…WVDPICQLAF (117 aa)). Residue Ser-138 is modified to Phosphoserine. Positions 157 to 261 (EVTEFPVIVQ…ARQRERLPEL (105 aa)) constitute an IRS-type PTB domain. Ser-274 is modified (phosphoserine). Positions 278 to 299 (LEPPGELREVAPGFELPTPRKL) are disordered. A phosphoserine mark is found at Ser-308 and Ser-314. Residue Tyr-325 is modified to Phosphotyrosine. The interval 354-390 (GLTNGGPEAQEGPPGGRSPLGSPIYHNTEDLSWPGSA) is disordered. The segment covering 358 to 376 (GGPEAQEGPPGGRSPLGSP) has biased composition (low complexity). A Phosphoserine modification is found at Ser-371.

It belongs to the DOK family. Type A subfamily. On tyrosine phosphorylation, interacts with CSK and INPP5D/SHIP1 via their SH2 domains. Both Tyr-325 and Tyr-343 are required for interaction with INPP5D. Only Tyr-325 is required for interaction with CSK. Binds ABL1 through the PTB domain and in a kinase-dependent manner. Does not interact with RasGAP. Constitutively tyrosine-phosphorylated. Post-translationally, on IL2 stimulation, phosphorylated on C-terminal tyrosine residues possibly by Src kinases. Can also be phosphorylated by ABL1 kinase. As to expression, predominantly expressed in bone marrow, spleen and lung. Low levels in heart, brain, liver, muscle, thymus, kidney and testis. Highly expressed in B-cells and macrophages.

The protein localises to the cytoplasm. The protein resides in the cell membrane. DOK proteins are enzymatically inert adaptor or scaffolding proteins. They provide a docking platform for the assembly of multimolecular signaling complexes. DOK3 is a negative regulator of JNK signaling in B-cells through interaction with INPP5D/SHIP1. May modulate ABL1 function. This chain is Docking protein 3 (Dok3), found in Mus musculus (Mouse).